Reading from the N-terminus, the 348-residue chain is tRNA N6-adenosine threonylcarbamoyltransferase (348 aa).

The Fe cation site is built by His118 and His122. Substrate-binding positions include 140-144 (LVSGG), Asp173, Gly186, Asp190, and Asn279. Asp309 contributes to the Fe cation binding site.

Belongs to the KAE1 / TsaD family. The cofactor is Fe(2+).

The protein localises to the cytoplasm. It catalyses the reaction L-threonylcarbamoyladenylate + adenosine(37) in tRNA = N(6)-L-threonylcarbamoyladenosine(37) in tRNA + AMP + H(+). Required for the formation of a threonylcarbamoyl group on adenosine at position 37 (t(6)A37) in tRNAs that read codons beginning with adenine. Is involved in the transfer of the threonylcarbamoyl moiety of threonylcarbamoyl-AMP (TC-AMP) to the N6 group of A37, together with TsaE and TsaB. TsaD likely plays a direct catalytic role in this reaction. This chain is tRNA N6-adenosine threonylcarbamoyltransferase, found in Lactiplantibacillus plantarum (strain ATCC BAA-793 / NCIMB 8826 / WCFS1) (Lactobacillus plantarum).